Reading from the N-terminus, the 130-residue chain is Cholecystokinin (130 aa).

The signal sequence occupies residues 1 to 20; that stretch reads MYSGICIYMFLAMLSTSSSG. The propeptide occupies 21–60; sequence QQATGSHNENPVATELEQSLTEHHRHVRVPSSAGQLKPIQ. Tyrosine 112 is subject to Sulfotyrosine. Phenylalanine 118 carries the phenylalanine amide modification. The propeptide occupies 122 to 130; that stretch reads SAEEYEYSS. Sulfotyrosine occurs at positions 126 and 128.

The protein belongs to the gastrin/cholecystokinin family. In terms of processing, the precursor is cleaved by proteases to produce a number of active cholecystokinins. As to expression, expressed in brain, duodenum and small intestine.

The protein resides in the secreted. In terms of biological role, this peptide hormone induces gall bladder contraction and the release of pancreatic enzymes in the gut. Its function in the brain is not clear. The protein is Cholecystokinin of Trachemys scripta (Red-eared slider turtle).